The sequence spans 64 residues: Large ribosomal subunit protein bL35 (64 aa).

Basic residues predominate over residues 1–26; that stretch reads MPKIKTHRGAAKRFKKTGTGKIKRSK. The segment at 1–48 is disordered; that stretch reads MPKIKTHRGAAKRFKKTGTGKIKRSKAYASHLLGGKSPKRKRNLRKAG.

This sequence belongs to the bacterial ribosomal protein bL35 family.

This is Large ribosomal subunit protein bL35 from Syntrophomonas wolfei subsp. wolfei (strain DSM 2245B / Goettingen).